A 440-amino-acid chain; its full sequence is Beta-1,3-galactosyl-O-glycosyl-glycoprotein beta-1,6-N-acetylglucosaminyltransferase (440 aa).

The Cytoplasmic portion of the chain corresponds to M1 to K9. Residues L10 to L30 traverse the membrane as a helical; Signal-anchor for type II membrane protein segment. The Lumenal portion of the chain corresponds to R31–L440. N-linked (GlcNAc...) asparagine; by host glycosylation is found at N72 and N108. Cystine bridges form between C73–C230, C164–C384, C185–C212, and C393–C425.

The protein belongs to the glycosyltransferase 14 family.

Its subcellular location is the host Golgi apparatus membrane. It carries out the reaction a 3-O-[beta-D-galactosyl-(1-&gt;3)-N-acetyl-alpha-D-galactosaminyl]-L-seryl-[protein] + UDP-N-acetyl-alpha-D-glucosamine = 3-O-{beta-D-galactosyl-(1-&gt;3)-[N-acetyl-beta-D-glucosaminyl-(1-&gt;6)]-N-acetyl-alpha-D-galactosaminyl}-L-seryl-[protein] + UDP + H(+). It catalyses the reaction a 3-O-[beta-D-galactosyl-(1-&gt;3)-N-acetyl-alpha-D-galactosaminyl]-L-threonyl-[protein] + UDP-N-acetyl-alpha-D-glucosamine = a 3-O-{beta-D-galactosyl-(1-&gt;3)-[N-acetyl-beta-D-glucosaminyl-(1-&gt;6)]-N-acetyl-alpha-D-galactosaminyl}-L-threonyl-[protein] + UDP + H(+). The catalysed reaction is a beta-D-Gal-(1-&gt;4)-beta-D-GlcNAc-(1-&gt;3)-beta-D-Gal-(1-&gt;4)-beta-D-GlcNAc derivative + UDP-N-acetyl-alpha-D-glucosamine = a beta-D-Gal-(1-&gt;4)-beta-D-GlcNAc-(1-&gt;3)-[beta-D-GlcNAc-(1-&gt;6)]-beta-D-Gal-(1-&gt;4)-N-acetyl-beta-D-glucosaminyl derivative + UDP + H(+). The enzyme catalyses 3-O-[N-acetyl-beta-D-glucosaminyl-(1-&gt;3)-N-acetyl-alpha-D-galactosaminyl]-L-seryl-[protein] + UDP-N-acetyl-alpha-D-glucosamine = 3-O-[N-acetyl-beta-D-glucosaminyl-(1-&gt;3)-[N-acetyl-beta-D-glucosaminyl-(1-&gt;6)]-N-acetyl-alpha-D-galactosaminyl]-L-seryl-[protein] + UDP + H(+). It carries out the reaction a 3-O-[N-acetyl-beta-D-glucosaminyl-(1-&gt;3)-N-acetyl-alpha-D-galactosaminyl]-L-threonyl-[protein] + UDP-N-acetyl-alpha-D-glucosamine = 3-O-[N-acetyl-beta-D-glucosaminyl-(1-&gt;3)-[N-acetyl-beta-D-glucosaminyl-(1-&gt;6)]-N-acetyl-alpha-D-galactosaminyl]-L-threonyl-[protein] + UDP + H(+). The protein operates within protein modification; protein glycosylation. Functionally, non-essential glycosyltransferase that can synthesize all known mucin beta 6 N-acetylglucosaminides. Mediates core 2 and core 4 O-glycan branching, 2 important steps in mucin-type biosynthesis. Has also I-branching enzyme activity by converting linear into branched poly-N-acetyllactosaminoglycans. Contributes to the post-translational modifications of structural proteins. The protein is Beta-1,3-galactosyl-O-glycosyl-glycoprotein beta-1,6-N-acetylglucosaminyltransferase (Bo17) of Bovine herpesvirus 4 (strain V. test) (BoHV-4).